The sequence spans 254 residues: MPAKTPIYLKAANNKKGKKFKLRDILSPDMISPPLGDFRHTIHIGKEGQHDVFGDISFLQGNYELLPGNQEKAHSGQFPGHNDFFRANSTSDSMFTETPSPVLKNAISLPTIGGSQALMLPLLSPVTFHSKQESFGRPKLPRLSCEPVMEEKVQEQSSLLENGAVHQGDTSWGSSGSGSQSSQGRDSHSSSLSEQSSDWPADDMFEHPASCELVKSKTKSEESFSDLTGSLLSLQLDLGPSLLDEVLNVMDKNK.

The region spanning 31-45 is the CRIB domain; it reads ISPPLGDFRHTIHIG. Phosphotyrosine is present on Tyr63. Ser89, Ser108, and Ser144 each carry phosphoserine. Positions 165–205 are disordered; sequence VHQGDTSWGSSGSGSQSSQGRDSHSSSLSEQSSDWPADDMF. Residues 171 to 197 show a composition bias toward low complexity; it reads SWGSSGSGSQSSQGRDSHSSSLSEQSS.

It belongs to the BORG/CEP family. Interacts with RHOQ and CDC42, in a GTP-dependent manner, and with SEPT7.

Its subcellular location is the endomembrane system. The protein localises to the cytoplasm. It localises to the cytoskeleton. Its function is as follows. Probably involved in the organization of the actin cytoskeleton. May act downstream of CDC42 to induce actin filament assembly leading to cell shape changes. Induces pseudopodia formation in fibroblasts. This Mus musculus (Mouse) protein is Cdc42 effector protein 3 (Cdc42ep3).